Consider the following 264-residue polypeptide: S-adenosylmethionine decarboxylase proenzyme (264 aa).

Catalysis depends on Ser113, which acts as the Schiff-base intermediate with substrate; via pyruvic acid. At Ser113 the chain carries Pyruvic acid (Ser); by autocatalysis. Catalysis depends on His118, which acts as the Proton acceptor; for processing activity. Catalysis depends on Cys141, which acts as the Proton donor; for catalytic activity.

The protein belongs to the prokaryotic AdoMetDC family. Type 2 subfamily. In terms of assembly, heterooctamer of four alpha and four beta chains arranged as a tetramer of alpha/beta heterodimers. Pyruvate serves as cofactor. Post-translationally, is synthesized initially as an inactive proenzyme. Formation of the active enzyme involves a self-maturation process in which the active site pyruvoyl group is generated from an internal serine residue via an autocatalytic post-translational modification. Two non-identical subunits are generated from the proenzyme in this reaction, and the pyruvate is formed at the N-terminus of the alpha chain, which is derived from the carboxyl end of the proenzyme. The post-translation cleavage follows an unusual pathway, termed non-hydrolytic serinolysis, in which the side chain hydroxyl group of the serine supplies its oxygen atom to form the C-terminus of the beta chain, while the remainder of the serine residue undergoes an oxidative deamination to produce ammonia and the pyruvoyl group blocking the N-terminus of the alpha chain.

The catalysed reaction is S-adenosyl-L-methionine + H(+) = S-adenosyl 3-(methylsulfanyl)propylamine + CO2. Its pathway is amine and polyamine biosynthesis; S-adenosylmethioninamine biosynthesis; S-adenosylmethioninamine from S-adenosyl-L-methionine: step 1/1. Catalyzes the decarboxylation of S-adenosylmethionine to S-adenosylmethioninamine (dcAdoMet), the propylamine donor required for the synthesis of the polyamines spermine and spermidine from the diamine putrescine. This chain is S-adenosylmethionine decarboxylase proenzyme, found in Xylella fastidiosa (strain Temecula1 / ATCC 700964).